A 288-amino-acid chain; its full sequence is MESVPGDYSKRVYQGVRVKHTVKDLLAEKRSGQTSNSRLNGSVSSSQSPFVQMPGSPVTSGYYGVRRSFLSDSDFHNSKQFSNDVYTSSVGKPFPCESSAGQSHAALLEPYFPQEPYGDYRPPALTPNAGSLFSASPLPPLLPPPFPGDPAHFLFRDSWEQTLPDGLSQPDPVSADALLTLPPSTSCLSQLESGSIAQHRGSSWGSSLAGAQSYSLHALEDLHHTPGYPTPPPYPFTPFMTVSNDLPPKVGPLSPDEEADTGSLHDPSPWVKEDGSIAWGSYECRRAY.

The 23-residue stretch at Lys10 to Gly32 folds into the OCA domain. 2 disordered regions span residues Asp24 to Gln52 and Pro247 to Asp274. The segment covering Ser35–Ser48 has biased composition (low complexity).

This sequence belongs to the POU2AF family. In terms of assembly, interacts with POU2F3 (via the POU domain) in a DNA-dependent manner; this interaction recruits POU2AF2 to chromatin and increases POU2F3 transactivation activity. Expressed in tuft cells of colon mucosa, as well as in small intestine and thymus.

The protein resides in the cytoplasm. It localises to the cytosol. The protein localises to the nucleus. Functionally, transcriptional coactivator of POU2F3. This complex drives the development of tuft cells, a rare chemosensory cells that coordinate immune and neural functions within mucosal epithelial tissues. In Homo sapiens (Human), this protein is POU domain class 2-associating factor 2.